We begin with the raw amino-acid sequence, 566 residues long: DNA ligase B (566 aa).

K125 (N6-AMP-lysine intermediate) is an active-site residue.

It belongs to the NAD-dependent DNA ligase family. LigB subfamily.

The enzyme catalyses NAD(+) + (deoxyribonucleotide)n-3'-hydroxyl + 5'-phospho-(deoxyribonucleotide)m = (deoxyribonucleotide)n+m + AMP + beta-nicotinamide D-nucleotide.. Catalyzes the formation of phosphodiester linkages between 5'-phosphoryl and 3'-hydroxyl groups in double-stranded DNA using NAD as a coenzyme and as the energy source for the reaction. The protein is DNA ligase B of Pseudomonas putida (strain ATCC 700007 / DSM 6899 / JCM 31910 / BCRC 17059 / LMG 24140 / F1).